Here is a 344-residue protein sequence, read N- to C-terminus: UDP-N-acetylenolpyruvoylglucosamine reductase (344 aa).

The FAD-binding PCMH-type domain occupies 17–187; it reads VDYACSELIS…TGVGIKLAKK (171 aa). R163 is a catalytic residue. S233 serves as the catalytic Proton donor. The active site involves E329.

It belongs to the MurB family. FAD is required as a cofactor.

It is found in the cytoplasm. The enzyme catalyses UDP-N-acetyl-alpha-D-muramate + NADP(+) = UDP-N-acetyl-3-O-(1-carboxyvinyl)-alpha-D-glucosamine + NADPH + H(+). It functions in the pathway cell wall biogenesis; peptidoglycan biosynthesis. Its function is as follows. Cell wall formation. In Shewanella sediminis (strain HAW-EB3), this protein is UDP-N-acetylenolpyruvoylglucosamine reductase.